The following is a 289-amino-acid chain: Rhodopsin (289 aa).

Topologically, residues 1–7 (YLVNPAA) are extracellular. A helical transmembrane segment spans residues 8–32 (YAALGAYMFLLILIGFPVNFLTLYV). Residues 33–44 (TIEHKKLRTPLN) lie on the Cytoplasmic side of the membrane. Residues 45–67 (YILLNLAVANLFMVLGGFTTTMY) form a helical membrane-spanning segment. Residues 68–81 (TSMHGYFVLGRLGC) lie on the Extracellular side of the membrane. Cys81 and Cys158 are oxidised to a cystine. The chain crosses the membrane as a helical span at residues 82–104 (NLEGFFATMGGEIALWSLVVLAI). Positions 105 to 107 (ERW) match the 'Ionic lock' involved in activated form stabilization motif. At 105–123 (ERWIVVCKPISNFRFTEDH) the chain is on the cytoplasmic side. A helical transmembrane segment spans residues 124-144 (AIMGLAFTWVMALSCAVPPLV). At 145 to 173 (GWSRYIPEGMQCSCGVDYYTRAEGFNNES) the chain is on the extracellular side. N-linked (GlcNAc...) asparagine glycosylation occurs at Asn171. The chain crosses the membrane as a helical span at residues 174–195 (FVIYMFIVHFLTPLIIISFCYG). At 196 to 223 (RLLCAVKEAAAAQQESETTQRAEREVSR) the chain is on the cytoplasmic side. A helical transmembrane segment spans residues 224 to 245 (MVVMMVISFLMCWLPYASVAWY). Over 246 to 257 (IFCNQGSEFGPI) the chain is Extracellular. A helical transmembrane segment spans residues 258–279 (FMTLPAFFAKSSAIYNPLIYIC). N6-(retinylidene)lysine is present on Lys267. At 280 to 289 (MNKQFRHCMI) the chain is on the cytoplasmic side.

Belongs to the G-protein coupled receptor 1 family. Opsin subfamily. In terms of processing, phosphorylated on some or all of the serine and threonine residues present in the C-terminal region. Contains one covalently linked retinal chromophore.

The protein localises to the membrane. It is found in the cell projection. The protein resides in the cilium. It localises to the photoreceptor outer segment. Photoreceptor required for image-forming vision at low light intensity. While most salt water fish species use retinal as chromophore, most freshwater fish use 3-dehydroretinal, or a mixture of retinal and 3-dehydroretinal. Light-induced isomerization of 11-cis to all-trans retinal triggers a conformational change that activates signaling via G-proteins. Subsequent receptor phosphorylation mediates displacement of the bound G-protein alpha subunit by arrestin and terminates signaling. The sequence is that of Rhodopsin (rho) from Cottocomephorus inermis (Longfin Baikal sculpin).